The sequence spans 73 residues: Stigmurin (73 aa).

The N-terminal stretch at 1–22 is a signal peptide; it reads MQIKHLITLFFLVLIVADQCSA. Position 39 is a lysine amide (Lys-39). Positions 45–73 are excised as a propeptide; the sequence is EISAQIEQYKDLQKREAELEKLLDRLPMY.

It belongs to the non-disulfide-bridged peptide (NDBP) superfamily. Short antimicrobial peptide (group 4) family. As to expression, expressed by the venom gland.

It localises to the secreted. Its function is as follows. Antimicrobial peptide with activity against Gram-positive bacterial strains (S.aureus (MIC=2-140 uM), methicillin-resistant S.aureus (MRSA) (MIC=8-17 uM), S.epidermidis (MIC=1.17 uM), and the yeasts C.albicans, C.krusei, and C.glabrata (MIC=34-69 uM)). Acts by disrupting the cell membrane (observed on outer layer of the S.aureus). Is not active against Gram-negative bacteria (E.coli, E.Cloacae, P.aeruginosa), and the Gram-positive bacterium E.faecalis. Also shows toxicity against several cell lines, but possess low hemolytic activity at the highest concentration tested. Also shows antiparasitic activity against Trypanosoma cruzi by decreasing the viability of the epimastigote and trypomastigote forms of the parasite. Displays high hydroxyl radical scavenging activity (antioxidant action). In a wound infection model, the topical application of this peptide demonstrates antibacterial effects, as well as an ability to accelerate wound closure speed, which suggests the induction of tissue repair. In the model of polymicrobial sepsis, it exhibits an antibiotic effect, reducing the levels of microorganisms in the infectious focus and the inflammatory responses in the lung and cecum of septic animals. The protein is Stigmurin of Tityus stigmurus (Brazilian scorpion).